The sequence spans 138 residues: Small ribosomal subunit protein uS11c (138 aa).

Residues 1–22 form a disordered region; it reads MAKPIPKIGSRKNARSGSRKHL. Positions 9-22 are enriched in basic residues; sequence GSRKNARSGSRKHL.

This sequence belongs to the universal ribosomal protein uS11 family. In terms of assembly, part of the 30S ribosomal subunit.

It is found in the plastid. Its subcellular location is the chloroplast. The sequence is that of Small ribosomal subunit protein uS11c from Lotus japonicus (Lotus corniculatus var. japonicus).